A 480-amino-acid chain; its full sequence is Argininosuccinate lyase (480 aa).

Residues 1-17 (MTDTTPSADLGASSQQP) are compositionally biased toward polar residues. Residues 1–24 (MTDTTPSADLGASSQQPAKAWSGR) are disordered.

Belongs to the lyase 1 family. Argininosuccinate lyase subfamily.

The protein resides in the cytoplasm. The enzyme catalyses 2-(N(omega)-L-arginino)succinate = fumarate + L-arginine. The protein operates within amino-acid biosynthesis; L-arginine biosynthesis; L-arginine from L-ornithine and carbamoyl phosphate: step 3/3. In Azoarcus sp. (strain BH72), this protein is Argininosuccinate lyase.